Here is a 286-residue protein sequence, read N- to C-terminus: ATP synthase gamma chain (286 aa).

Belongs to the ATPase gamma chain family. In terms of assembly, F-type ATPases have 2 components, CF(1) - the catalytic core - and CF(0) - the membrane proton channel. CF(1) has five subunits: alpha(3), beta(3), gamma(1), delta(1), epsilon(1). CF(0) has three main subunits: a, b and c.

The protein localises to the cell membrane. Produces ATP from ADP in the presence of a proton gradient across the membrane. The gamma chain is believed to be important in regulating ATPase activity and the flow of protons through the CF(0) complex. The polypeptide is ATP synthase gamma chain (Malacoplasma penetrans (strain HF-2) (Mycoplasma penetrans)).